The primary structure comprises 92 residues: MLYKKLRSQGNFRKNDSAYFKLENKRELKGDNLPVEEKVRQTIEKFKDDVSEIRRLADDSDFGCNGKETGGAMHIVCFFQKNYDWMKGQWQN.

The sequence is that of 11 kDa excretory-secretory protein from Trichostrongylus colubriformis (Black scour worm).